The primary structure comprises 281 residues: MIKFKLILIFFLFIVSTTYASVARPFDFRKWNFKKDIDLAYVLMHDLDNGILIKSQDKAGSIKSQEVLTKLNALNAYCNNLQRIIKAKLVRGRFQKEVELPLLKIIRKYKYLTRNYKNKSLIENPEYTKLIAERIIKKALFLENYFQSNRLKNVKSGENIKKRISDNQSKLKSLRSKPNKSVGSKFSKNSRPSKSPQGVKKCNKRRILDKYDLNGAESEFLDDPSQESDELEREYQDDELESEDPDDGEREYQDDRESRDDTFNEDQSEDEFFDSLEDQFI.

The segment at K162–I281 is disordered. The span at N179–P196 shows a compositional bias: polar residues. The span at E219–E249 shows a compositional bias: acidic residues. The span at R250–T262 shows a compositional bias: basic and acidic residues. The segment covering F263–I281 has biased composition (acidic residues).

It localises to the cell outer membrane. This is Putative outer membrane protein BBA52 from Borreliella burgdorferi (strain ATCC 35210 / DSM 4680 / CIP 102532 / B31) (Borrelia burgdorferi).